The following is a 385-amino-acid chain: Tryptophan--tRNA ligase (385 aa).

Residues 82 to 90 carry the 'HIGH' region motif; it reads PSGPMHIGH. The 'KMSKS' region motif lies at 253-257; sequence KMSAS.

The protein belongs to the class-I aminoacyl-tRNA synthetase family.

The protein localises to the cytoplasm. It catalyses the reaction tRNA(Trp) + L-tryptophan + ATP = L-tryptophyl-tRNA(Trp) + AMP + diphosphate + H(+). The chain is Tryptophan--tRNA ligase from Pyrococcus furiosus (strain ATCC 43587 / DSM 3638 / JCM 8422 / Vc1).